Reading from the N-terminus, the 259-residue chain is LOB domain-containing protein CRL1 (259 aa).

One can recognise an LOB domain in the interval 6–108; sequence SPCGACKFLR…AQLASLKAAA (103 aa).

It belongs to the LOB domain-containing protein family. Can form homodimers. As to expression, expressed in unelongating basal internodes, at the base of shoot in parenchyma cells adjacent to the peripheral vascular cylinder of the stem, and root pericycle cells. Expressed in lateral and adventitious root primordia, tiller primordia, vascular tissues, scutellum, and young pedicels.

The protein localises to the nucleus. In terms of biological role, acts as a positive regulator of adventitious (crown) root formation by promoting its initiation. Acts as a positive regulator of lateral root formation. Regulated by the auxin response factor and transcriptional activator ARF23/ARF1. Involved in auxin-mediated cell dedifferentiation, and may promote the initial cell division in the pericycle cells adjacent to the peripheral vascular cylinder at the base of the stem. May act upstream of the gene regulatory network controlling adventitious root (crown) development. This chain is LOB domain-containing protein CRL1, found in Oryza sativa subsp. japonica (Rice).